The following is a 206-amino-acid chain: Ribosomal RNA large subunit methyltransferase E (206 aa).

G63, W65, D83, D99, and D124 together coordinate S-adenosyl-L-methionine. K164 functions as the Proton acceptor in the catalytic mechanism.

The protein belongs to the class I-like SAM-binding methyltransferase superfamily. RNA methyltransferase RlmE family.

The protein resides in the cytoplasm. The enzyme catalyses uridine(2552) in 23S rRNA + S-adenosyl-L-methionine = 2'-O-methyluridine(2552) in 23S rRNA + S-adenosyl-L-homocysteine + H(+). Specifically methylates the uridine in position 2552 of 23S rRNA at the 2'-O position of the ribose in the fully assembled 50S ribosomal subunit. The chain is Ribosomal RNA large subunit methyltransferase E from Buchnera aphidicola subsp. Acyrthosiphon pisum (strain APS) (Acyrthosiphon pisum symbiotic bacterium).